The primary structure comprises 393 residues: Lipoyl synthase, mitochondrial (393 aa).

[4Fe-4S] cluster contacts are provided by Cys-115, Cys-120, Cys-126, Cys-146, Cys-150, Cys-153, and Ser-362. Positions 131–351 (ETGTATATIM…RILGMDMGFR (221 aa)) constitute a Radical SAM core domain.

The protein belongs to the radical SAM superfamily. Lipoyl synthase family. [4Fe-4S] cluster serves as cofactor.

The protein resides in the mitochondrion. The catalysed reaction is [[Fe-S] cluster scaffold protein carrying a second [4Fe-4S](2+) cluster] + N(6)-octanoyl-L-lysyl-[protein] + 2 oxidized [2Fe-2S]-[ferredoxin] + 2 S-adenosyl-L-methionine + 4 H(+) = [[Fe-S] cluster scaffold protein] + N(6)-[(R)-dihydrolipoyl]-L-lysyl-[protein] + 4 Fe(3+) + 2 hydrogen sulfide + 2 5'-deoxyadenosine + 2 L-methionine + 2 reduced [2Fe-2S]-[ferredoxin]. It functions in the pathway protein modification; protein lipoylation via endogenous pathway; protein N(6)-(lipoyl)lysine from octanoyl-[acyl-carrier-protein]: step 2/2. Catalyzes the radical-mediated insertion of two sulfur atoms into the C-6 and C-8 positions of the octanoyl moiety bound to the lipoyl domains of lipoate-dependent enzymes, thereby converting the octanoylated domains into lipoylated derivatives. The chain is Lipoyl synthase, mitochondrial from Vitis vinifera (Grape).